The chain runs to 200 residues: Urease accessory protein UreE (200 aa).

Residues 171–200 (HHGHAHPHPHDHDHQHGPGCAHGRHGHDHH) are disordered.

This sequence belongs to the UreE family.

The protein resides in the cytoplasm. Its function is as follows. Involved in urease metallocenter assembly. Binds nickel. Probably functions as a nickel donor during metallocenter assembly. The polypeptide is Urease accessory protein UreE (Burkholderia vietnamiensis (strain G4 / LMG 22486) (Burkholderia cepacia (strain R1808))).